Consider the following 75-residue polypeptide: UPF0352 protein YejL (75 aa).

The protein belongs to the UPF0352 family.

This Salmonella arizonae (strain ATCC BAA-731 / CDC346-86 / RSK2980) protein is UPF0352 protein YejL.